The primary structure comprises 549 residues: Glucose-6-phosphate isomerase (549 aa).

E353 (proton donor) is an active-site residue. Catalysis depends on residues H384 and K512.

This sequence belongs to the GPI family.

It localises to the cytoplasm. It catalyses the reaction alpha-D-glucose 6-phosphate = beta-D-fructose 6-phosphate. It participates in carbohydrate biosynthesis; gluconeogenesis. Its pathway is carbohydrate degradation; glycolysis; D-glyceraldehyde 3-phosphate and glycerone phosphate from D-glucose: step 2/4. Functionally, catalyzes the reversible isomerization of glucose-6-phosphate to fructose-6-phosphate. This chain is Glucose-6-phosphate isomerase, found in Solidesulfovibrio magneticus (strain ATCC 700980 / DSM 13731 / RS-1) (Desulfovibrio magneticus).